Here is a 1216-residue protein sequence, read N- to C-terminus: 1-phosphatidylinositol 4,5-bisphosphate phosphodiesterase beta-1 (1216 aa).

C17 carries the S-palmitoyl cysteine lipid modification. S236 is modified (phosphoserine). Positions 316 to 467 (EDMSQPLSHY…LMYKILVKNK (152 aa)) constitute a PI-PLC X-box domain. Active-site residues include H331 and H378. The residue at position 417 (S417) is a Phosphoserine. The tract at residues 469–534 (KSHKSSEGSG…MDEGTAGSEA (66 aa)) is disordered. The span at 472–483 (KSSEGSGKKKLS) shows a compositional bias: basic and acidic residues. The segment covering 491–501 (SDSSSVFEPSS) has biased composition (low complexity). A compositionally biased stretch (acidic residues) spans 507 to 518 (ADTESDDDDDDD). T509 carries the post-translational modification Phosphothreonine. Residues S511 and S582 each carry the phosphoserine modification. Residues 540–656 (MSNLVNYIQP…GYRLKPEFMR (117 aa)) form the PI-PLC Y-box domain. The C2 domain occupies 656 to 784 (RRPDKHFDPF…CLRNERNQPL (129 aa)). Disordered regions lie at residues 834-891 (DEEE…VKAP), 933-993 (LVKR…IEQD), 1071-1095 (KMDK…EEEK), and 1172-1216 (KISE…DTPL). A Phosphoserine; by PKC modification is found at S887. Basic and acidic residues-rich tracts occupy residues 941–951 (TTDLIKEHTTK) and 959–979 (YLRR…KKSE). A phosphoserine mark is found at S978 and S987. A compositionally biased stretch (polar residues) spans 980–991 (PSSPDHVSSTIE). The segment covering 1075–1095 (KRQEKITEAKSKDKSQMEEEK) has biased composition (basic and acidic residues). Over residues 1187 to 1198 (TSDSGKLNQKPP) the composition is skewed to polar residues. Phosphoserine is present on residues S1199 and S1200. Positions 1207–1216 (NPGKEFDTPL) are enriched in basic and acidic residues.

In terms of assembly, interacts with DGKQ. The cofactor is Ca(2+). Palmitoylated. Palmitoylation at Cys-17 by ZDHHC21 regulates the signaling activity of PLCB1 and the function of the endothelial barrier. Palmitoylation by ZDHHC21 is stimulated by inflammation.

The protein localises to the nucleus membrane. Its subcellular location is the cytoplasm. The enzyme catalyses a 1,2-diacyl-sn-glycero-3-phospho-(1D-myo-inositol-4,5-bisphosphate) + H2O = 1D-myo-inositol 1,4,5-trisphosphate + a 1,2-diacyl-sn-glycerol + H(+). It carries out the reaction a 1,2-diacyl-sn-glycero-3-phospho-(1D-myo-inositol) + H2O = 1D-myo-inositol 1-phosphate + a 1,2-diacyl-sn-glycerol + H(+). Its function is as follows. Catalyzes the hydrolysis of 1-phosphatidylinositol 4,5-bisphosphate into diacylglycerol (DAG) and inositol 1,4,5-trisphosphate (IP3) and mediates intracellular signaling downstream of G protein-coupled receptors. Regulates the function of the endothelial barrier. This chain is 1-phosphatidylinositol 4,5-bisphosphate phosphodiesterase beta-1 (PLCB1), found in Bos taurus (Bovine).